Here is a 156-residue protein sequence, read N- to C-terminus: Small ribosomal subunit protein uS7 (156 aa).

Belongs to the universal ribosomal protein uS7 family. As to quaternary structure, part of the 30S ribosomal subunit. Contacts proteins S9 and S11.

In terms of biological role, one of the primary rRNA binding proteins, it binds directly to 16S rRNA where it nucleates assembly of the head domain of the 30S subunit. Is located at the subunit interface close to the decoding center, probably blocks exit of the E-site tRNA. The polypeptide is Small ribosomal subunit protein uS7 (Polynucleobacter asymbioticus (strain DSM 18221 / CIP 109841 / QLW-P1DMWA-1) (Polynucleobacter necessarius subsp. asymbioticus)).